The chain runs to 130 residues: MQFRKGRPKILRLISEEPKFNIFKPVGIPKNELESVVLTLEELESLRLVDYVGQSHEDAADSMGISRRVFWNILKSARKKVSDALINGKMIDIGGGYYQIRKCNEQECQGMPCRFGLSNCFKNKNKDNEL.

This sequence belongs to the UPF0251 family.

This is UPF0251 protein Mevan_1492 from Methanococcus vannielii (strain ATCC 35089 / DSM 1224 / JCM 13029 / OCM 148 / SB).